Consider the following 130-residue polypeptide: Astrocytic phosphoprotein PEA-15 (130 aa).

A DED domain is found at 3–81; it reads EYGTLLQDLT…RPDLLTMVVD (79 aa). Ser-61, Ser-90, Ser-104, and Ser-116 each carry phosphoserine. Residues 98–107 form a microtubule-binding region; sequence KLTRIPSAKK. The microtubule-binding stretch occupies residues 122-129; it reads KLAPPPKK.

Binds RPS6KA3, MAPK3 and MAPK1. Transient interaction with PLD1 and PLD2. Interacts with CASP8 and FADD. Post-translationally, phosphorylated by protein kinase C and calcium-calmodulin-dependent protein kinase. These phosphorylation events are modulated by neurotransmitters or hormones. In terms of tissue distribution, ubiquitously expressed. Most abundant in tissues such as heart, brain, muscle and adipose tissue which utilize glucose as an energy source. Lower expression in glucose-producing tissues. Higher levels of expression are found in tissues from individuals with type 2 diabetes than in controls.

The protein resides in the cytoplasm. Its function is as follows. Blocks Ras-mediated inhibition of integrin activation and modulates the ERK MAP kinase cascade. Inhibits RPS6KA3 activities by retaining it in the cytoplasm. Inhibits both TNFRSF6- and TNFRSF1A-mediated CASP8 activity and apoptosis. Regulates glucose transport by controlling both the content of SLC2A1 glucose transporters on the plasma membrane and the insulin-dependent trafficking of SLC2A4 from the cell interior to the surface. This chain is Astrocytic phosphoprotein PEA-15 (PEA15), found in Homo sapiens (Human).